Reading from the N-terminus, the 119-residue chain is NADH-quinone oxidoreductase subunit A (119 aa).

Helical transmembrane passes span Val-9–Val-29, Leu-63–Val-83, and Val-88–Ala-108.

The protein belongs to the complex I subunit 3 family. As to quaternary structure, NDH-1 is composed of 14 different subunits. Subunits NuoA, H, J, K, L, M, N constitute the membrane sector of the complex.

The protein resides in the cell inner membrane. The catalysed reaction is a quinone + NADH + 5 H(+)(in) = a quinol + NAD(+) + 4 H(+)(out). Its function is as follows. NDH-1 shuttles electrons from NADH, via FMN and iron-sulfur (Fe-S) centers, to quinones in the respiratory chain. The immediate electron acceptor for the enzyme in this species is believed to be ubiquinone. Couples the redox reaction to proton translocation (for every two electrons transferred, four hydrogen ions are translocated across the cytoplasmic membrane), and thus conserves the redox energy in a proton gradient. This Verminephrobacter eiseniae (strain EF01-2) protein is NADH-quinone oxidoreductase subunit A.